Here is a 458-residue protein sequence, read N- to C-terminus: Argininosuccinate lyase (458 aa).

Belongs to the lyase 1 family. Argininosuccinate lyase subfamily.

The protein localises to the cytoplasm. The catalysed reaction is 2-(N(omega)-L-arginino)succinate = fumarate + L-arginine. It participates in amino-acid biosynthesis; L-arginine biosynthesis; L-arginine from L-ornithine and carbamoyl phosphate: step 3/3. This chain is Argininosuccinate lyase, found in Trichlorobacter lovleyi (strain ATCC BAA-1151 / DSM 17278 / SZ) (Geobacter lovleyi).